The sequence spans 901 residues: HTH-type transcriptional regulator MalT (901 aa).

ATP is bound at residue 39 to 46 (SPAGYGKT). Positions 829-894 (ELIRTSPLTQ…AAVQHAQKLL (66 aa)) constitute an HTH luxR-type domain. The H-T-H motif DNA-binding region spans 853-872 (NEQIAGELEVAATTIKTHIR).

It belongs to the MalT family. Monomer in solution. Oligomerizes to an active state in the presence of the positive effectors ATP and maltotriose.

Its activity is regulated as follows. Activated by ATP and maltotriose, which are both required for DNA binding. Its function is as follows. Positively regulates the transcription of the maltose regulon whose gene products are responsible for uptake and catabolism of malto-oligosaccharides. Specifically binds to the promoter region of its target genes, recognizing a short DNA motif called the MalT box. This is HTH-type transcriptional regulator MalT from Escherichia coli (strain 55989 / EAEC).